The following is a 441-amino-acid chain: Cytochrome P450 monooxygenase cpsC (441 aa).

The segment at 175 to 195 (STTSQARKDETTATQQAGMEQ) is disordered. Polar residues predominate over residues 186–195 (TATQQAGMEQ). Cysteine 377 is a binding site for heme.

The protein belongs to the cytochrome P450 family. Heme is required as a cofactor.

It catalyses the reaction campesine D + reduced [NADPH--hemoprotein reductase] + O2 = campesine G + oxidized [NADPH--hemoprotein reductase] + 2 H2O + H(+). It functions in the pathway alkaloid biosynthesis. Its function is as follows. Cytochrome P450 monooxygenase; part of the gene cluster that mediates the biosynthesis of campesine G, a dimeric indole piperazine alkaloid that shows good insecticidal activity Galleria mellonella. Within the pathway, cpsC catalyzes regioselective dehydrogenation reaction towards C2-N1 of the (2H)-indole ring of campesine D to yield the final product, campesine G. The non-canonical non-ribosomal peptide synthetase cpsA catalyzes the first steps of the pathway by producing L-tryptophanal and L-valinal from their respective amino-acids. These products condensate spontaneously to form trypyl-valyl pyrazine also known as didehydrocampesine A. The NmrA-like family domain-containing oxidoreductase cpsB is the next enzyme in cps pathway and reduces the unstable didehydrocampesine A to campesine A. The methyltransferase cpsF and the acetyltransferase cpsE both recognize N13 of piperazine ring to carry out methylation and acetylation of campesine A to produce campesine C and B, respectively. The cytochrome P450 monooxygenase cpsD then acts as a dimerase that catalyzes oxidative heterocoupling between campesine B and C to produce heterodimers with unexpected 6/5/6/6/6/6/5/6 eight-ring scaffold called campesine D. Finally,the cytochrome P450 monooxygenase cpsC is a regioselective dehydrogenase that catalyzes dehydrogenation reaction towards C2-N1 to produce campesine G. This Aspergillus campestris (strain IBT 28561) protein is Cytochrome P450 monooxygenase cpsC.